The following is a 343-amino-acid chain: Selenide, water dikinase (343 aa).

Residue Sec-15 is part of the active site. A non-standard amino acid (selenocysteine) is located at residue Sec-15. Residues Lys-18 and 45 to 47 (TAD) each bind ATP. Asp-48 serves as a coordination point for Mg(2+). Residues Asp-65, Asp-88, and 135–137 (GHT) contribute to the ATP site. Asp-88 is a Mg(2+) binding site. Asp-223 is a binding site for Mg(2+).

The protein belongs to the selenophosphate synthase 1 family. Class I subfamily. As to quaternary structure, homodimer. It depends on Mg(2+) as a cofactor.

It catalyses the reaction hydrogenselenide + ATP + H2O = selenophosphate + AMP + phosphate + 2 H(+). Its function is as follows. Synthesizes selenophosphate from selenide and ATP. The protein is Selenide, water dikinase of Carboxydothermus hydrogenoformans (strain ATCC BAA-161 / DSM 6008 / Z-2901).